Reading from the N-terminus, the 606-residue chain is MRNKTCGELRASAISANVQLCGWVDRRRDHGGVIFIDLRDRSGTIQITVDPDQGQDLFSIAESLRNETVLQINGLVRARPDEAINTKIPTGEVEVLAKNIKILNTVTSTLPFSVSIHDEESVKEEIRLKHRYLDLRRERMNNNLRLRHNTVKAARSFLENEGFIEVETPILTRSTPEGARDYLVPSRVCGGEFFALPQSPQLFKQLLMVGGVERYYQVARCFRDEDLRADRQPEFTQLDIEMSFMEEKEIIELNEKLIVSIWKKIKGIDLQTPFPRMTWQEAMDRFGTDRPDTRYGMELVNTSDLFSKSGFKVFSNAISSGGCVKCITIEDGNNLISNVRIKPGGDIFSEAQKAGAGGLAFIRVRDDKEVDTIGAIKDNLTTSQIKELLLKTQAKPGDLILFGAGPTNIVNRTLDRVRQFIAKDLKIISDNELKTQWNFLWVTDFPMFEFNSDENRLEAIHHPFCAPKPEDIGESESLWKDKLPNSNAQAYDLVLNGLEIGGGSLRIHNSELQKTVLEVIGLSKNEAEEQFGFLIDALAMGAPPHGGIAFGLDRIVMLLANEDSIRDTIAFPKTQQARCSMAKAPANVENKQLEDLHIASTWIDPD.

E177 contributes to the L-aspartate binding site. The interval 201-204 (QLFK) is aspartate. R223 lines the L-aspartate pocket. ATP is bound by residues 223–225 (RDE) and Q232. H461 lines the L-aspartate pocket. Residue E499 participates in ATP binding. Residue R506 participates in L-aspartate binding. 551-554 (GLDR) serves as a coordination point for ATP.

The protein belongs to the class-II aminoacyl-tRNA synthetase family. Type 1 subfamily. In terms of assembly, homodimer.

It localises to the cytoplasm. It catalyses the reaction tRNA(Asx) + L-aspartate + ATP = L-aspartyl-tRNA(Asx) + AMP + diphosphate. In terms of biological role, aspartyl-tRNA synthetase with relaxed tRNA specificity since it is able to aspartylate not only its cognate tRNA(Asp) but also tRNA(Asn). Reaction proceeds in two steps: L-aspartate is first activated by ATP to form Asp-AMP and then transferred to the acceptor end of tRNA(Asp/Asn). This is Aspartate--tRNA(Asp/Asn) ligase from Prochlorococcus marinus (strain NATL2A).